Consider the following 176-residue polypeptide: Peptide deformylase (176 aa).

2 residues coordinate Fe cation: C95 and H137. E138 is an active-site residue. H141 lines the Fe cation pocket.

Belongs to the polypeptide deformylase family. Fe(2+) serves as cofactor.

The catalysed reaction is N-terminal N-formyl-L-methionyl-[peptide] + H2O = N-terminal L-methionyl-[peptide] + formate. In terms of biological role, removes the formyl group from the N-terminal Met of newly synthesized proteins. Requires at least a dipeptide for an efficient rate of reaction. N-terminal L-methionine is a prerequisite for activity but the enzyme has broad specificity at other positions. The protein is Peptide deformylase of Hyphomonas neptunium (strain ATCC 15444).